Here is a 511-residue protein sequence, read N- to C-terminus: Glycoprotein (511 aa).

Positions 1–16 (MKCLLYLAFLFIGVNC) are cleaved as a signal peptide. Over 17-467 (KFTIVFPHNQ…FSSWKSSIAS (451 aa)) the chain is Virion surface. Residues 18–35 (FTIVFPHNQKGNWKNVPS) form a trimerization region. Cystine bridges form between C40/C300, C75/C108, C84/C130, C169/C174, C193/C240, and C235/C269. Residues 53 to 172 (IGTAIQVKMP…QFINGKCSNY (120 aa)) are fusion peptide. N-linked (GlcNAc...) asparagine; by host glycosylation is present at N179. The segment at 259–309 (DLFAAARFPECPEGSSISAPSQTSVDVSLIQDVERILDYSLCQETWSKIRA) is trimerization. N336 carries an N-linked (GlcNAc...) asparagine; by host glycan. Positions 383–405 (EIGPNGVLRTSSGYKFPLYMIGH) are trimerization. The chain crosses the membrane as a helical span at residues 468–488 (FFFIIGLIIGLFLVLRVGIHL). C489 carries the S-palmitoyl cysteine; by host lipid modification. The Intravirion segment spans residues 489–511 (CIKLKHTKKRQIYTDIEMNRLGK). The basolateral targeting ex vivo motif lies at 496 to 506 (KKRQIYTDIEM).

Belongs to the vesiculovirus glycoprotein family. Homotrimer. Interacts with host LDL at target cell surface. Post-translationally, glycosylated by host. Palmitoylated by host.

It is found in the virion membrane. The protein resides in the host membrane. Its function is as follows. Attaches the virus to host LDL receptors, inducing clathrin-dependent endocytosis of the virion. In the endosome, the acidic pH induces conformational changes in the glycoprotein trimer, which trigger fusion between virus and endosomal membrane. This Aedes (Bovine) protein is Glycoprotein (G).